Consider the following 269-residue polypeptide: Protein MGF 360-15R (269 aa).

This sequence belongs to the asfivirus MGF 360 family.

In terms of biological role, plays a role in virus cell tropism, and may be required for efficient virus replication in macrophages. The sequence is that of Protein MGF 360-15R from African swine fever virus (isolate Pig/Kenya/KEN-50/1950) (ASFV).